The primary structure comprises 515 residues: RNA-splicing ligase RtcB homolog (515 aa).

D129, C132, H237, H269, and H363 together coordinate Mn(2+). N236 to E240 contacts GMP. GMP is bound by residues H363–N364, G412–M415, S419, H438–G441, and K514. The active-site GMP-histidine intermediate is H438.

Belongs to the RtcB family. In terms of assembly, catalytic component of the tRNA-splicing ligase complex. Mn(2+) is required as a cofactor.

It catalyses the reaction a 3'-end 3'-phospho-ribonucleotide-RNA + a 5'-end dephospho-ribonucleoside-RNA + GTP = a ribonucleotidyl-ribonucleotide-RNA + GMP + diphosphate. The enzyme catalyses a 3'-end 2',3'-cyclophospho-ribonucleotide-RNA + a 5'-end dephospho-ribonucleoside-RNA + GTP + H2O = a ribonucleotidyl-ribonucleotide-RNA + GMP + diphosphate + H(+). Catalytic subunit of the tRNA-splicing ligase complex that acts by directly joining spliced tRNA halves to mature-sized tRNAs by incorporating the precursor-derived splice junction phosphate into the mature tRNA as a canonical 3',5'-phosphodiester. May act as an RNA ligase with broad substrate specificity, and may function toward other RNAs. This Ostreococcus tauri protein is RNA-splicing ligase RtcB homolog.